We begin with the raw amino-acid sequence, 1389 residues long: DNA-directed RNA polymerase subunit beta'' (1389 aa).

Zn(2+)-binding residues include C224, C295, C302, and C305.

This sequence belongs to the RNA polymerase beta' chain family. RpoC2 subfamily. As to quaternary structure, in plastids the minimal PEP RNA polymerase catalytic core is composed of four subunits: alpha, beta, beta', and beta''. When a (nuclear-encoded) sigma factor is associated with the core the holoenzyme is formed, which can initiate transcription. Zn(2+) serves as cofactor.

The protein localises to the plastid. The protein resides in the chloroplast. It carries out the reaction RNA(n) + a ribonucleoside 5'-triphosphate = RNA(n+1) + diphosphate. In terms of biological role, DNA-dependent RNA polymerase catalyzes the transcription of DNA into RNA using the four ribonucleoside triphosphates as substrates. The protein is DNA-directed RNA polymerase subunit beta'' of Atropa belladonna (Belladonna).